A 467-amino-acid polypeptide reads, in one-letter code: Glutamate--tRNA ligase (467 aa).

A 'HIGH' region motif is present at residues 9–19; sequence PSPTGFLHIGG. The short motif at 250-254 is the 'KMSKS' region element; it reads KLSKR. Lysine 253 is an ATP binding site.

It belongs to the class-I aminoacyl-tRNA synthetase family. Glutamate--tRNA ligase type 1 subfamily. Monomer.

It localises to the cytoplasm. It catalyses the reaction tRNA(Glu) + L-glutamate + ATP = L-glutamyl-tRNA(Glu) + AMP + diphosphate. In terms of biological role, catalyzes the attachment of glutamate to tRNA(Glu) in a two-step reaction: glutamate is first activated by ATP to form Glu-AMP and then transferred to the acceptor end of tRNA(Glu). The sequence is that of Glutamate--tRNA ligase from Mesomycoplasma hyopneumoniae (strain J / ATCC 25934 / NCTC 10110) (Mycoplasma hyopneumoniae).